The primary structure comprises 241 residues: Dolichol-phosphate mannosyltransferase subunit 1 (241 aa).

The GDP-alpha-D-mannose site is built by Pro13, Tyr15, Glu17, Ile44, Asp46, Asp99, Ala100, Asp101, Arg128, Arg215, and Lys221. Asp101 serves as a coordination point for Mg(2+). A Mn(2+)-binding site is contributed by Asp101.

It belongs to the glycosyltransferase 2 family. It depends on Mg(2+) as a cofactor. Requires Mn(2+) as cofactor. Ca(2+) serves as cofactor.

It is found in the endoplasmic reticulum. It catalyses the reaction a di-trans,poly-cis-dolichyl phosphate + GDP-alpha-D-mannose = a di-trans,poly-cis-dolichyl beta-D-mannosyl phosphate + GDP. It participates in protein modification; protein glycosylation. Transfers mannose from GDP-mannose to dolichol monophosphate to form dolichol phosphate mannose (Dol-P-Man) which is the mannosyl donor in pathways leading to N-glycosylation, glycosyl phosphatidylinositol membrane anchoring, and O-mannosylation of proteins. The polypeptide is Dolichol-phosphate mannosyltransferase subunit 1 (Drosophila melanogaster (Fruit fly)).